The primary structure comprises 484 residues: Glutamate--tRNA ligase (484 aa).

The 'HIGH' region motif lies at 9–19 (PSPTGNLHIGT). 4 residues coordinate Zn(2+): Cys-98, Cys-100, His-125, and His-127. A 'KMSKS' region motif is present at residues 250–254 (KLSKR). Lys-253 contributes to the ATP binding site.

Belongs to the class-I aminoacyl-tRNA synthetase family. Glutamate--tRNA ligase type 1 subfamily. In terms of assembly, monomer. Zn(2+) serves as cofactor.

The protein resides in the cytoplasm. The enzyme catalyses tRNA(Glu) + L-glutamate + ATP = L-glutamyl-tRNA(Glu) + AMP + diphosphate. Catalyzes the attachment of glutamate to tRNA(Glu) in a two-step reaction: glutamate is first activated by ATP to form Glu-AMP and then transferred to the acceptor end of tRNA(Glu). The sequence is that of Glutamate--tRNA ligase from Crocosphaera subtropica (strain ATCC 51142 / BH68) (Cyanothece sp. (strain ATCC 51142)).